We begin with the raw amino-acid sequence, 1937 residues long: Myosin-2 (1937 aa).

The Myosin N-terminal SH3-like domain occupies 33–82 (DAKTSVFVAEPKESFVKGTIQSREGGKVTVKTDAGATLTVKEDQVFPMNP). 2 positions are modified to phosphothreonine: T64 and T69. A Myosin motor domain is found at 86–780 (DKIEDMAMMT…LLGLLEEMRD (695 aa)). The residue at position 130 (K130) is an N6,N6,N6-trimethyllysine. 179 to 186 (GESGAGKT) is a binding site for ATP. Residue Y387 is modified to Phosphotyrosine. At T417 the chain carries Phosphothreonine. Phosphoserine is present on S623. Positions 657–679 (LNKLMTNLRSTHPHFVRCIIPNE) are actin-binding. H755 carries the pros-methylhistidine modification. The interval 759 to 773 (KFGHTKVFFKAGLLG) is actin-binding. Residues 783 to 812 (LAQIITRTQARCRGFLARVEYQKMVERRES) form the IQ domain. The stretch at 841–1937 (LLKSAETEKE…EVHTKIISEE (1097 aa)) forms a coiled coil. Position 1094 is a phosphoserine (S1094). 2 disordered regions span residues 1124-1145 (IEAE…SREL) and 1151-1170 (RLEE…KKRE). Over residues 1126–1145 (AERASRAKAEKQRSDLSREL) the composition is skewed to basic and acidic residues. Phosphoserine is present on residues S1160 and S1235. T1239 is modified (phosphothreonine). A Phosphoserine modification is found at S1241. T1253 carries the phosphothreonine modification. A Phosphoserine modification is found at S1259. A Phosphothreonine modification is found at T1284. A phosphoserine mark is found at S1290, S1301, and S1304. Y1462 is subject to Phosphotyrosine. T1465 carries the phosphothreonine modification. Phosphoserine is present on S1472. Y1490 is modified (phosphotyrosine). S1493 is subject to Phosphoserine. Phosphothreonine is present on T1499. S1512 carries the post-translational modification Phosphoserine. T1515 carries the post-translational modification Phosphothreonine. Residues S1540, S1552, S1572, S1712, and S1724 each carry the phosphoserine modification. T1728 and T1734 each carry phosphothreonine. Position 1737 is a phosphoserine (S1737). A disordered region spans residues 1883 to 1913 (QAEEAEEQSNTNLSKFRKLQHELEEAEERAD).

The protein belongs to the TRAFAC class myosin-kinesin ATPase superfamily. Myosin family. As to quaternary structure, muscle myosin is a hexameric protein that consists of 2 heavy chain subunits (MHC), 2 alkali light chain subunits (MLC) and 2 regulatory light chain subunits (MLC-2). Interacts with GCSAM.

Its subcellular location is the cytoplasm. The protein localises to the myofibril. Myosins are actin-based motor molecules with ATPase activity essential for muscle contraction. The polypeptide is Myosin-2 (MYH2) (Equus caballus (Horse)).